Here is a 141-residue protein sequence, read N- to C-terminus: Putative pre-16S rRNA nuclease (141 aa).

This sequence belongs to the YqgF nuclease family.

It is found in the cytoplasm. Could be a nuclease involved in processing of the 5'-end of pre-16S rRNA. This chain is Putative pre-16S rRNA nuclease, found in Desulforudis audaxviator (strain MP104C).